A 160-amino-acid polypeptide reads, in one-letter code: MATFEGRFTDLGQVRIAVVVARFNDLVTAKLLSGCLDCLSRHGVDTTAESSQLDVAWVPGSFELPLVSQNLARSGLYQVVITLGAVIRGDTPHFDVVVAEASKGIAAVARDTGVPVIFGVLTTDTMQQALERAGIKSNLGWSYGLEALEMASLMKVLPGH.

Residues Phe-23, 61–63 (SFE), and 85–87 (AVI) each bind 5-amino-6-(D-ribitylamino)uracil. 90–91 (DT) lines the (2S)-2-hydroxy-3-oxobutyl phosphate pocket. His-93 acts as the Proton donor in catalysis. Phe-118 provides a ligand contact to 5-amino-6-(D-ribitylamino)uracil. Arg-132 serves as a coordination point for (2S)-2-hydroxy-3-oxobutyl phosphate.

Belongs to the DMRL synthase family.

The catalysed reaction is (2S)-2-hydroxy-3-oxobutyl phosphate + 5-amino-6-(D-ribitylamino)uracil = 6,7-dimethyl-8-(1-D-ribityl)lumazine + phosphate + 2 H2O + H(+). It participates in cofactor biosynthesis; riboflavin biosynthesis; riboflavin from 2-hydroxy-3-oxobutyl phosphate and 5-amino-6-(D-ribitylamino)uracil: step 1/2. Its function is as follows. Catalyzes the formation of 6,7-dimethyl-8-ribityllumazine by condensation of 5-amino-6-(D-ribitylamino)uracil with 3,4-dihydroxy-2-butanone 4-phosphate. This is the penultimate step in the biosynthesis of riboflavin. The chain is 6,7-dimethyl-8-ribityllumazine synthase from Synechococcus sp. (strain CC9311).